The primary structure comprises 489 residues: IPT/TIG domain-containing protein BACOVA_02650 (489 aa).

Residues 1-27 (MKSIYKYLDTRLFLIGLLVLPFLAVVS) form the signal peptide. Cys-28 carries N-palmitoyl cysteine lipidation. The S-diacylglycerol cysteine moiety is linked to residue Cys-28. IPT/TIG domains lie at 57–103 (VNPG…PNEL), 136–204 (PYIT…TAPA), and 232–304 (PVVT…AIGG).

Its subcellular location is the cell outer membrane. It participates in glucan metabolism; xyloglucan degradation. Its function is as follows. Polysaccharide-binding protein present at the surface of the cell. Probably mediates xyloglucan-binding before xyloglucan transport in the periplasm for degradation. The protein is IPT/TIG domain-containing protein BACOVA_02650 of Bacteroides ovatus (strain ATCC 8483 / DSM 1896 / JCM 5824 / BCRC 10623 / CCUG 4943 / NCTC 11153).